The primary structure comprises 66 residues: Large ribosomal subunit protein bL33c (66 aa).

The protein belongs to the bacterial ribosomal protein bL33 family.

Its subcellular location is the plastid. It is found in the chloroplast. The chain is Large ribosomal subunit protein bL33c from Fagopyrum esculentum subsp. ancestrale (Wild buckwheat).